A 511-amino-acid chain; its full sequence is Histidine ammonia-lyase (511 aa).

The segment at residues 142–144 (ASG) is a cross-link (5-imidazolinone (Ala-Gly)). 2,3-didehydroalanine (Ser) is present on serine 143.

This sequence belongs to the PAL/histidase family. Contains an active site 4-methylidene-imidazol-5-one (MIO), which is formed autocatalytically by cyclization and dehydration of residues Ala-Ser-Gly.

The protein localises to the cytoplasm. The enzyme catalyses L-histidine = trans-urocanate + NH4(+). Its pathway is amino-acid degradation; L-histidine degradation into L-glutamate; N-formimidoyl-L-glutamate from L-histidine: step 1/3. This is Histidine ammonia-lyase from Brucella ovis (strain ATCC 25840 / 63/290 / NCTC 10512).